Consider the following 246-residue polypeptide: MTTGDCCHLPGSLCDCSSSPAFSKVVEATGLGPPQYVAQVTSRDGRLLSTVIRALDSQSDCPFCRICHEGANGENLLSPCGCTGTLGAVHKSCLEKWLSSSNTSYCELCHTEFAVEKRPRPLTEWLKDPGPRTEKRTLCCDMVCFVFITPLAAISGWLCLRGAQDHLRLHSRLEAVGLIALTIALFTIYVLWTLVSFRYHCQLYSEWRKTNQKVRLKIREADGSEDPHHSLLATGLLKKVAEETPV.

An RING-CH-type zinc finger spans residues 56–116 (DSQSDCPFCR…ELCHTEFAVE (61 aa)). Zn(2+) contacts are provided by Cys-64, Cys-67, Cys-80, Cys-82, His-90, Cys-93, Cys-106, and Cys-109. Positions 121–246 (PLTEWLKDPG…LKKVAEETPV (126 aa)) are required for interaction with IKBKG. 2 helical membrane passes run 138–158 (LCCDMVCFVFITPLAAISGWL) and 175–195 (AVGLIALTIALFTIYVLWTLV).

In terms of assembly, interacts with STX6; the interaction promotes MARCHF2-mediated ubiquitination and degradation of CFTR. Interacts with MARCHF3. Interacts with GOPC/CAL; the interaction leads to CFTR ubiquitination and degradation. Interacts with CFTR; the interaction leads to CFTR ubiqtuitination and degradation. Interacts (via PDZ domain) with DLG1 (via PDZ domains); the interaction leads to DLG1 ubiqtuitination and degradation. Interacts with ERGIC3. Interacts with ADRB2. Interacts with IKBKG/NEMO; during the late stages of macrophage viral and bacterial infection; the interaction leads to ubiquitination and degradation of IKBKG/NEMO.

It localises to the endoplasmic reticulum membrane. The protein resides in the lysosome membrane. Its subcellular location is the endosome membrane. It is found in the golgi apparatus membrane. The protein localises to the cytoplasm. It localises to the cell membrane. It catalyses the reaction S-ubiquitinyl-[E2 ubiquitin-conjugating enzyme]-L-cysteine + [acceptor protein]-L-lysine = [E2 ubiquitin-conjugating enzyme]-L-cysteine + N(6)-ubiquitinyl-[acceptor protein]-L-lysine.. It participates in protein modification; protein ubiquitination. In terms of biological role, E3 ubiquitin-protein ligase that may mediate ubiquitination of TFRC and CD86, and promote their subsequent endocytosis and sorting to lysosomes via multivesicular bodies. E3 ubiquitin ligases accept ubiquitin from an E2 ubiquitin-conjugating enzyme in the form of a thioester and then directly transfer the ubiquitin to targeted substrates. Together with GOPC/CAL mediates the ubiquitination and lysosomal degradation of CFTR. Ubiquitinates and therefore mediates the degradation of DLG1. Regulates the intracellular trafficking and secretion of alpha1-antitrypsin/SERPINA1 and HP/haptoglobin via ubiquitination and degradation of the cargo receptor ERGIC3. Negatively regulates the antiviral and antibacterial immune response by repression of the NF-kB and type 1 IFN signaling pathways, via MARCHF2-mediated K48-linked polyubiquitination of IKBKG/NEMO, resulting in its proteasomal degradation. May be involved in endosomal trafficking through interaction with STX6. The chain is E3 ubiquitin-protein ligase MARCHF2 (Marchf2) from Mus musculus (Mouse).